The primary structure comprises 752 residues: Maltodextrin phosphorylase (752 aa).

Lys603 bears the N6-(pyridoxal phosphate)lysine mark.

This sequence belongs to the glycogen phosphorylase family. It depends on pyridoxal 5'-phosphate as a cofactor.

It catalyses the reaction [(1-&gt;4)-alpha-D-glucosyl](n) + phosphate = [(1-&gt;4)-alpha-D-glucosyl](n-1) + alpha-D-glucose 1-phosphate. Phosphorylase is an important allosteric enzyme in carbohydrate metabolism. Enzymes from different sources differ in their regulatory mechanisms and in their natural substrates. However, all known phosphorylases share catalytic and structural properties. The chain is Maltodextrin phosphorylase (malP) from Streptococcus pneumoniae serotype 4 (strain ATCC BAA-334 / TIGR4).